Consider the following 146-residue polypeptide: Large ribosomal subunit protein uL15 (146 aa).

The segment at M1–Q54 is disordered. Composition is skewed to gly residues over residues R21–A31 and S42–G52.

The protein belongs to the universal ribosomal protein uL15 family. In terms of assembly, part of the 50S ribosomal subunit.

Functionally, binds to the 23S rRNA. This Clostridium botulinum (strain Eklund 17B / Type B) protein is Large ribosomal subunit protein uL15.